The following is a 250-amino-acid chain: Pyrroloquinoline-quinone synthase (250 aa).

It belongs to the PqqC family.

It carries out the reaction 6-(2-amino-2-carboxyethyl)-7,8-dioxo-1,2,3,4,7,8-hexahydroquinoline-2,4-dicarboxylate + 3 O2 = pyrroloquinoline quinone + 2 H2O2 + 2 H2O + H(+). It participates in cofactor biosynthesis; pyrroloquinoline quinone biosynthesis. Functionally, ring cyclization and eight-electron oxidation of 3a-(2-amino-2-carboxyethyl)-4,5-dioxo-4,5,6,7,8,9-hexahydroquinoline-7,9-dicarboxylic-acid to PQQ. The sequence is that of Pyrroloquinoline-quinone synthase from Xanthomonas oryzae pv. oryzae (strain MAFF 311018).